Reading from the N-terminus, the 344-residue chain is UDP-N-acetylglucosamine--N-acetylmuramyl-(pentapeptide) pyrophosphoryl-undecaprenol N-acetylglucosamine transferase (344 aa).

UDP-N-acetyl-alpha-D-glucosamine-binding positions include T9–G11, N118, R157, S188, and Q282.

The protein belongs to the glycosyltransferase 28 family. MurG subfamily.

The protein localises to the cell inner membrane. It catalyses the reaction di-trans,octa-cis-undecaprenyl diphospho-N-acetyl-alpha-D-muramoyl-L-alanyl-D-glutamyl-meso-2,6-diaminopimeloyl-D-alanyl-D-alanine + UDP-N-acetyl-alpha-D-glucosamine = di-trans,octa-cis-undecaprenyl diphospho-[N-acetyl-alpha-D-glucosaminyl-(1-&gt;4)]-N-acetyl-alpha-D-muramoyl-L-alanyl-D-glutamyl-meso-2,6-diaminopimeloyl-D-alanyl-D-alanine + UDP + H(+). The protein operates within cell wall biogenesis; peptidoglycan biosynthesis. Its function is as follows. Cell wall formation. Catalyzes the transfer of a GlcNAc subunit on undecaprenyl-pyrophosphoryl-MurNAc-pentapeptide (lipid intermediate I) to form undecaprenyl-pyrophosphoryl-MurNAc-(pentapeptide)GlcNAc (lipid intermediate II). The protein is UDP-N-acetylglucosamine--N-acetylmuramyl-(pentapeptide) pyrophosphoryl-undecaprenol N-acetylglucosamine transferase of Aquifex aeolicus (strain VF5).